Consider the following 95-residue polypeptide: Small ribosomal subunit protein uS19 (95 aa).

This sequence belongs to the universal ribosomal protein uS19 family.

In terms of biological role, protein S19 forms a complex with S13 that binds strongly to the 16S ribosomal RNA. The chain is Small ribosomal subunit protein uS19 from Myxococcus xanthus (strain DK1622).